The chain runs to 572 residues: Urease subunit alpha (572 aa).

A Urease domain is found at 134–572; the sequence is GGIDSHIHFI…LPLAQRYFLF (439 aa). The Ni(2+) site is built by histidine 139, histidine 141, and lysine 222. Lysine 222 bears the N6-carboxylysine mark. Histidine 224 contributes to the substrate binding site. Ni(2+) contacts are provided by histidine 251 and histidine 277. Catalysis depends on histidine 325, which acts as the Proton donor. Aspartate 365 lines the Ni(2+) pocket.

It belongs to the metallo-dependent hydrolases superfamily. Urease alpha subunit family. Heterotrimer of UreA (gamma), UreB (beta) and UreC (alpha) subunits. Three heterotrimers associate to form the active enzyme. It depends on Ni cation as a cofactor. Carboxylation allows a single lysine to coordinate two nickel ions.

It is found in the cytoplasm. The catalysed reaction is urea + 2 H2O + H(+) = hydrogencarbonate + 2 NH4(+). It functions in the pathway nitrogen metabolism; urea degradation; CO(2) and NH(3) from urea (urease route): step 1/1. This chain is Urease subunit alpha, found in Paracidovorax citrulli (strain AAC00-1) (Acidovorax citrulli).